The chain runs to 315 residues: Methionyl-tRNA formyltransferase (315 aa).

110–113 (SLLP) is a binding site for (6S)-5,6,7,8-tetrahydrofolate.

The protein belongs to the Fmt family.

The enzyme catalyses L-methionyl-tRNA(fMet) + (6R)-10-formyltetrahydrofolate = N-formyl-L-methionyl-tRNA(fMet) + (6S)-5,6,7,8-tetrahydrofolate + H(+). In terms of biological role, attaches a formyl group to the free amino group of methionyl-tRNA(fMet). The formyl group appears to play a dual role in the initiator identity of N-formylmethionyl-tRNA by promoting its recognition by IF2 and preventing the misappropriation of this tRNA by the elongation apparatus. The chain is Methionyl-tRNA formyltransferase from Lactobacillus delbrueckii subsp. bulgaricus (strain ATCC BAA-365 / Lb-18).